The following is a 361-amino-acid chain: Zygote arrest protein 1 (361 aa).

Disordered stretches follow at residues 1-23 (MFPASTFHPCPHPYPQATKAGDG), 98-128 (QPAGCRASPDARSGSCQPRGHAGAGRSPRSW), and 148-252 (VAGG…EQDK). Phosphothreonine; by CDK1 is present on T154. S161 is modified (phosphoserine; by CDK1). The segment covering 168–177 (REPEPREVAA) has biased composition (basic and acidic residues). The segment at 263-346 (KYGYYHCKDC…RQDLCGRCKD (84 aa)) adopts a 3CxxC-type zinc-finger fold.

Belongs to the ZAR1 family. In terms of assembly, interacts with YBX2. Post-translationally, phosphorylation by CDK1 does not regulate formation of MARDO (mitochondria-associated ribonucleoprotein domain) membraneless compartment. Ubiquitinated and degradaded by the proteasome during oocyte meiotic maturation, leading to MARDO (mitochondria-associated ribonucleoprotein domain) membraneless compartment dissolution. As to expression, ovary. Expressed in primary oocytes (from primary through antral follicle stages) and during the progression from Meiosis I to Meiosis II. The mRNA is detected in growing oocytes (early primary follicle, type 3a) through fully grown oocytes (antral follicle, type 8).

The protein localises to the cytoplasm. Its subcellular location is the cytoplasmic ribonucleoprotein granule. Functionally, mRNA-binding protein that mediates formation of MARDO (mitochondria-associated ribonucleoprotein domain), a membraneless compartment that stores maternal mRNAs in oocytes. MARDO assembly around mitochondria is directed by an increase in mitochondrial membrane potential during oocyte growth. Promotes formation of MARDO phase-separated membraneless compartment by undergoing liquid-liquid phase separation upon binding to maternal mRNAs. Binds to the 3'-UTR of maternal mRNAs. Maternal mRNAs stored in the MARDO are translationally repressed. Essential for female fertility and oocyte-to-embryo transition by coordinating maternal mRNA storage, translation and degradation. The chain is Zygote arrest protein 1 from Mus musculus (Mouse).